The chain runs to 185 residues: Ribose 1,5-bisphosphate phosphokinase PhnN (185 aa).

10-17 (GPSGSGKD) is an ATP binding site.

The protein belongs to the ribose 1,5-bisphosphokinase family.

It carries out the reaction alpha-D-ribose 1,5-bisphosphate + ATP = 5-phospho-alpha-D-ribose 1-diphosphate + ADP. It functions in the pathway metabolic intermediate biosynthesis; 5-phospho-alpha-D-ribose 1-diphosphate biosynthesis; 5-phospho-alpha-D-ribose 1-diphosphate from D-ribose 5-phosphate (route II): step 3/3. Functionally, catalyzes the phosphorylation of ribose 1,5-bisphosphate to 5-phospho-D-ribosyl alpha-1-diphosphate (PRPP). The polypeptide is Ribose 1,5-bisphosphate phosphokinase PhnN (Escherichia coli O157:H7).